The primary structure comprises 201 residues: Small ribosomal subunit protein uS4c (201 aa).

Residues 89–157 form the S4 RNA-binding domain; sequence MRLDNILFRL…VQNYIASSDP (69 aa).

It belongs to the universal ribosomal protein uS4 family. As to quaternary structure, part of the 30S ribosomal subunit. Contacts protein S5. The interaction surface between S4 and S5 is involved in control of translational fidelity.

It localises to the plastid. Its subcellular location is the chloroplast. In terms of biological role, one of the primary rRNA binding proteins, it binds directly to 16S rRNA where it nucleates assembly of the body of the 30S subunit. Functionally, with S5 and S12 plays an important role in translational accuracy. In Triticum aestivum (Wheat), this protein is Small ribosomal subunit protein uS4c (rps4).